The chain runs to 431 residues: Serine--tRNA ligase (431 aa).

235-237 (TAE) contacts L-serine. ATP contacts are provided by residues 266-268 (RRE) and Val-282. L-serine is bound at residue Glu-289. An ATP-binding site is contributed by 353–356 (EASS). Residue Ser-389 coordinates L-serine.

It belongs to the class-II aminoacyl-tRNA synthetase family. Type-1 seryl-tRNA synthetase subfamily. Homodimer. The tRNA molecule binds across the dimer.

It is found in the cytoplasm. It catalyses the reaction tRNA(Ser) + L-serine + ATP = L-seryl-tRNA(Ser) + AMP + diphosphate + H(+). It carries out the reaction tRNA(Sec) + L-serine + ATP = L-seryl-tRNA(Sec) + AMP + diphosphate + H(+). It functions in the pathway aminoacyl-tRNA biosynthesis; selenocysteinyl-tRNA(Sec) biosynthesis; L-seryl-tRNA(Sec) from L-serine and tRNA(Sec): step 1/1. Catalyzes the attachment of serine to tRNA(Ser). Is also able to aminoacylate tRNA(Sec) with serine, to form the misacylated tRNA L-seryl-tRNA(Sec), which will be further converted into selenocysteinyl-tRNA(Sec). This chain is Serine--tRNA ligase, found in Prosthecochloris aestuarii (strain DSM 271 / SK 413).